Consider the following 186-residue polypeptide: uncharacterized protein (186 aa).

3 disordered regions span residues 17–47, 77–105, and 121–164; these read LSGE…EETF, EDKL…AAEA, and QQAA…PVAG. The segment covering 90 to 105 has biased composition (low complexity); that stretch reads PLAARPPSQAAAAAEA. Over residues 136–149 the composition is skewed to acidic residues; sequence PEPDPEPADEAAEE.

This is an uncharacterized protein from Homo sapiens (Human).